We begin with the raw amino-acid sequence, 89 residues long: Small ribosomal subunit protein uS17 (89 aa).

The protein belongs to the universal ribosomal protein uS17 family. As to quaternary structure, part of the 30S ribosomal subunit.

One of the primary rRNA binding proteins, it binds specifically to the 5'-end of 16S ribosomal RNA. This is Small ribosomal subunit protein uS17 from Phytoplasma mali (strain AT).